An 870-amino-acid chain; its full sequence is NEDD4-like E3 ubiquitin-protein ligase WWP2 (870 aa).

One can recognise a C2 domain in the interval 1–117; it reads MASASSSRAG…KNNGGKMENT (117 aa). The tract at residues 150 to 300 is disordered; it reads SVPNGSAVTD…QLPAAAQAPD (151 aa). Polar residues predominate over residues 152–171; the sequence is PNGSAVTDGSQPPSRESSGT. Residues 198–208 are compositionally biased toward low complexity; that stretch reads GGSARTATAAS. The residue at position 211 (serine 211) is a Phosphoserine. Composition is skewed to polar residues over residues 222 to 235 and 262 to 289; these read VKNS…NGTV and SVSS…TSGT. Residues 290-300 are compositionally biased toward low complexity; it reads QQLPAAAQAPD. WW domains follow at residues 300-333, 330-363, 405-437, and 444-477; these read DALP…RPLP, RPLP…RPTA, GPLP…DPRT, and PALP…DPRP. The region spanning 536–870 is the HECT domain; that stretch reads KPYDLRRRLY…IEETEGFGQE (335 aa). Cysteine 838 functions as the Glycyl thioester intermediate in the catalytic mechanism.

As to quaternary structure, interacts with SCNN1A, SCNN1B, SCNN1G, WBP1, WBP2 and ATN1. Interacts with ERBB4, NDFIP1 and NDFIP2. Interacts with ARRDC4. Interacts with POU5F1, RBP1, EGR2 and SLC11A2. Interacts (via WW domains) with ARRDC1 (via PPxY motifs); ubiquitinates ARRDC1. Interacts (via WW domains) with ARRDC2 and ARRDC3. Post-translationally, autoubiquitinated. Ubiquitinated by the SCF(FBXL15) complex, leading to its degradation by the proteasome.

It localises to the nucleus. It catalyses the reaction S-ubiquitinyl-[E2 ubiquitin-conjugating enzyme]-L-cysteine + [acceptor protein]-L-lysine = [E2 ubiquitin-conjugating enzyme]-L-cysteine + N(6)-ubiquitinyl-[acceptor protein]-L-lysine.. Its pathway is protein modification; protein ubiquitination. With respect to regulation, activated by NDFIP1- and NDFIP2-binding. In terms of biological role, E3 ubiquitin-protein ligase which accepts ubiquitin from an E2 ubiquitin-conjugating enzyme in the form of a thioester and then directly transfers the ubiquitin to targeted substrates. Polyubiquitinates POU5F1 by 'Lys-63'-linked conjugation and promotes it to proteasomal degradation; regulates POU5F1 protein level during differentiation of embryonal carcinoma cells (ECCs) but not in undifferentiated ECCs and embryonic stem cells (ESCs). Ubiquitinates EGR2 and promotes it to proteasomal degradation; in T-cells the ubiquitination inhibits activation-induced cell death. Ubiquitinates SLC11A2; the ubiquitination is enhanced by presence of NDFIP1 and NDFIP2. Ubiquitinates RPB1 and promotes it to proteasomal degradation. The sequence is that of NEDD4-like E3 ubiquitin-protein ligase WWP2 (Wwp2) from Mus musculus (Mouse).